The sequence spans 241 residues: Uridylate kinase (241 aa).

Residues 10 to 13, Gly-53, and Arg-57 each bind ATP; that span reads KLSG. Residues Asp-72 and 133–140 contribute to the UMP site; that span reads AGSPYFST. ATP is bound by residues Asn-161, Tyr-167, and Asp-170.

Belongs to the UMP kinase family. In terms of assembly, homohexamer.

The protein localises to the cytoplasm. The enzyme catalyses UMP + ATP = UDP + ADP. Its pathway is pyrimidine metabolism; CTP biosynthesis via de novo pathway; UDP from UMP (UMPK route): step 1/1. Inhibited by UTP. Catalyzes the reversible phosphorylation of UMP to UDP. This is Uridylate kinase from Onion yellows phytoplasma (strain OY-M).